The chain runs to 571 residues: Protein PNS1 (571 aa).

The disordered stretch occupies residues 1-96; the sequence is MNDEEKHLAA…PDFPPDYNYK (96 aa). The Cytoplasmic segment spans residues 1-118; it reads MNDEEKHLAA…AVPKPKWNDK (118 aa). A compositionally biased stretch (polar residues) spans 15 to 31; sequence YQPNMHYQQQQEKQTGY. 2 stretches are compositionally biased toward low complexity: residues 39 to 52 and 71 to 80; these read QGGYNQNQNQDYYN and GNPNDNYNNQ. Residues 81 to 90 show a composition bias toward pro residues; sequence QPPPYTPDFP. The helical transmembrane segment at 119–139 threads the bilayer; sequence IGLVILALIFSGYLALSIIVI. The Extracellular segment spans residues 140 to 166; that stretch reads RAYAQTHSFQGWGIYSGENDYSLNTHT. The chain crosses the membrane as a helical span at residues 167–187; sequence LILYAFVLATAMVLSLLYFIA. The Cytoplasmic segment spans residues 188 to 189; that stretch reads AR. The helical transmembrane segment at 190-210 threads the bilayer; that stretch reads VWTKQFIWITYILHLLFSWGT. Residue A211 is a topological domain, extracellular. A helical membrane pass occupies residues 212-232; it reads IYYLVVGYYSAGIVFIVFAAL. Over 233 to 263 the chain is Cytoplasmic; sequence TTWWFWCSRKRIPFATIVLQTLIDVTRANPS. A helical transmembrane segment spans residues 264-284; it reads VLVISAVGTVVGACFGTWFSF. Residues 285–311 are Extracellular-facing; that stretch reads TIVSIYVKYDPDNRNPGCMTTGGSCSN. Residues 312-332 form a helical membrane-spanning segment; sequence GKLIGLILFAIFCGYYLTEVI. The Cytoplasmic segment spans residues 333–369; sequence KNVIHVTISGVYGSWYYCSKSDQGMPKHAAMSSFRRA. The helical transmembrane segment at 370-390 threads the bilayer; that stretch reads VTYSLGSISLGSLIVSIINFI. The Extracellular portion of the chain corresponds to 391-406; that stretch reads RQILSVLQQDARQSGD. Residues 407–427 form a helical membrane-spanning segment; it reads TLATVLLCFVQCCFGVLDWLV. The Cytoplasmic portion of the chain corresponds to 428–472; that stretch reads TYFNHYAYSYIALYGKAYVPSAKATWKLMQTRGIDAMVNDSLIGS. Residues 473 to 493 traverse the membrane as a helical segment; that stretch reads VLSFGASFVAYAAALVAYCFL. At 494 to 503 the chain is on the extracellular side; sequence KYTDPSYNSG. The chain crosses the membrane as a helical span at residues 504-524; it reads GGFYAPVVGLAFVIALQVSNI. Residues 525–571 are Cytoplasmic-facing; the sequence is TNVSLKSGCSTFFLALARDPEVLRVSYPQIYEEICRTYPPARDKLDI.

Belongs to the CTL (choline transporter-like) family.

It is found in the cell membrane. Functionally, probably involved in transport through the plasma membrane. The chain is Protein PNS1 (PNS1) from Yarrowia lipolytica (strain CLIB 122 / E 150) (Yeast).